The sequence spans 59 residues: Small ribosomal subunit protein bS21 (59 aa).

Belongs to the bacterial ribosomal protein bS21 family.

This Acaryochloris marina (strain MBIC 11017) protein is Small ribosomal subunit protein bS21.